The chain runs to 466 residues: ATP synthase subunit beta (466 aa).

Residue 152–159 participates in ATP binding; it reads GGAGVGKT.

This sequence belongs to the ATPase alpha/beta chains family. F-type ATPases have 2 components, CF(1) - the catalytic core - and CF(0) - the membrane proton channel. CF(1) has five subunits: alpha(3), beta(3), gamma(1), delta(1), epsilon(1). CF(0) has three main subunits: a(1), b(2) and c(9-12). The alpha and beta chains form an alternating ring which encloses part of the gamma chain. CF(1) is attached to CF(0) by a central stalk formed by the gamma and epsilon chains, while a peripheral stalk is formed by the delta and b chains.

Its subcellular location is the cell inner membrane. It catalyses the reaction ATP + H2O + 4 H(+)(in) = ADP + phosphate + 5 H(+)(out). In terms of biological role, produces ATP from ADP in the presence of a proton gradient across the membrane. The catalytic sites are hosted primarily by the beta subunits. This Helicobacter pylori (strain HPAG1) protein is ATP synthase subunit beta.